The sequence spans 201 residues: Small ribosomal subunit protein uS4c (201 aa).

The disordered stretch occupies residues 20–44 (GLTSKRPRAGSDLRNQSRSGKKSQY). One can recognise an S4 RNA-binding domain in the interval 89-152 (MRLDNILFRL…NSRTLVQNLL (64 aa)).

The protein belongs to the universal ribosomal protein uS4 family. In terms of assembly, part of the 30S ribosomal subunit. Contacts protein S5. The interaction surface between S4 and S5 is involved in control of translational fidelity.

Its subcellular location is the plastid. The protein localises to the chloroplast. Functionally, one of the primary rRNA binding proteins, it binds directly to 16S rRNA where it nucleates assembly of the body of the 30S subunit. Its function is as follows. With S5 and S12 plays an important role in translational accuracy. This is Small ribosomal subunit protein uS4c (rps4) from Arabis hirsuta (Hairy rock-cress).